Here is a 397-residue protein sequence, read N- to C-terminus: Tryptophan synthase beta chain (397 aa).

Lys-87 bears the N6-(pyridoxal phosphate)lysine mark.

It belongs to the TrpB family. As to quaternary structure, tetramer of two alpha and two beta chains. Pyridoxal 5'-phosphate serves as cofactor.

The catalysed reaction is (1S,2R)-1-C-(indol-3-yl)glycerol 3-phosphate + L-serine = D-glyceraldehyde 3-phosphate + L-tryptophan + H2O. The protein operates within amino-acid biosynthesis; L-tryptophan biosynthesis; L-tryptophan from chorismate: step 5/5. The beta subunit is responsible for the synthesis of L-tryptophan from indole and L-serine. This Salmonella arizonae (strain ATCC BAA-731 / CDC346-86 / RSK2980) protein is Tryptophan synthase beta chain.